We begin with the raw amino-acid sequence, 618 residues long: V-type proton ATPase catalytic subunit A (618 aa).

251–258 (GAFGCGKT) lines the ATP pocket.

The protein belongs to the ATPase alpha/beta chains family. In terms of assembly, V-ATPase is a heteromultimeric enzyme composed of a peripheral catalytic V1 complex (main components: subunits A, B, C, D, E, and F) attached to an integral membrane V0 proton pore complex (main component: the proteolipid protein).

The enzyme catalyses ATP + H2O + 4 H(+)(in) = ADP + phosphate + 5 H(+)(out). Functionally, catalytic subunit of the peripheral V1 complex of vacuolar ATPase. V-ATPase vacuolar ATPase is responsible for acidifying a variety of intracellular compartments in eukaryotic cells. The chain is V-type proton ATPase catalytic subunit A (vatA) from Dictyostelium discoideum (Social amoeba).